The sequence spans 599 residues: Spermatogenesis-associated protein 7 (599 aa).

The segment at 163 to 205 (KSSKVITNGPEKNSSSSPSSVDYAASGPRKLSSGALYGRRPRS) is disordered. A compositionally biased stretch (polar residues) spans 166–175 (KVITNGPEKN).

As to quaternary structure, found in a complex with CFAP410, NEK1 and SPATA7. Interacts with NEK1. Interacts with RPGRIP1. Interacts with RPGR. Interacts with NPHP4. Interacts with NPHP1. Interacts with AHI1.

The protein localises to the cytoplasm. Its subcellular location is the cytoskeleton. It localises to the cilium axoneme. The protein resides in the cilium basal body. It is found in the cell projection. The protein localises to the cilium. Its subcellular location is the photoreceptor outer segment. Its function is as follows. Involved in the maintenance of both rod and cone photoreceptor cells. It is required for recruitment and proper localization of RPGRIP1 to the photoreceptor connecting cilium (CC), as well as photoreceptor-specific localization of proximal CC proteins at the distal CC. Maintenance of protein localization at the photoreceptor-specific distal CC is essential for normal microtubule stability and to prevent photoreceptor degeneration. The polypeptide is Spermatogenesis-associated protein 7 (SPATA7) (Homo sapiens (Human)).